The primary structure comprises 216 residues: Protein-L-isoaspartate O-methyltransferase 1 (216 aa).

Residue Ser60 is part of the active site.

The protein belongs to the methyltransferase superfamily. L-isoaspartyl/D-aspartyl protein methyltransferase family.

The protein resides in the cytoplasm. It catalyses the reaction [protein]-L-isoaspartate + S-adenosyl-L-methionine = [protein]-L-isoaspartate alpha-methyl ester + S-adenosyl-L-homocysteine. Catalyzes the methyl esterification of L-isoaspartyl residues in peptides and proteins that result from spontaneous decomposition of normal L-aspartyl and L-asparaginyl residues. It plays a role in the repair and/or degradation of damaged proteins. This is Protein-L-isoaspartate O-methyltransferase 1 (pcm1) from Archaeoglobus fulgidus (strain ATCC 49558 / DSM 4304 / JCM 9628 / NBRC 100126 / VC-16).